Consider the following 419-residue polypeptide: Hyaluronidase-3 (419 aa).

The signal sequence occupies residues 1–16 (MTMQLGLALVLGVAMC). Disulfide bonds link cysteine 42–cysteine 331, cysteine 205–cysteine 220, cysteine 356–cysteine 367, cysteine 361–cysteine 395, and cysteine 397–cysteine 406. A glycan (N-linked (GlcNAc...) asparagine) is linked at asparagine 69. Glutamate 129 functions as the Proton donor in the catalytic mechanism. Asparagine 215 carries an N-linked (GlcNAc...) asparagine glycan. Positions 352–407 (AAMACSHQRCHGHGRCAWQDPGQLKVFLHLHPGGSPGAWESFSCRCYWGWAGPTCQ) constitute an EGF-like domain.

Belongs to the glycosyl hydrolase 56 family. Post-translationally, N-glycosylated. As to expression, highly expressed in bladder, spleen and liver. Expressed at low levels in the kidney.

Its subcellular location is the secreted. The protein localises to the cell membrane. It localises to the cytoplasmic vesicle. It is found in the secretory vesicle. The protein resides in the acrosome. Its subcellular location is the endoplasmic reticulum. The protein localises to the early endosome. It carries out the reaction Random hydrolysis of (1-&gt;4)-linkages between N-acetyl-beta-D-glucosamine and D-glucuronate residues in hyaluronate.. Functionally, facilitates sperm penetration into the layer of cumulus cells surrounding the egg by digesting hyaluronic acid. Involved in induction of the acrosome reaction in the sperm. Involved in follicular atresia, the breakdown of immature ovarian follicles that are not selected to ovulate. Induces ovarian granulosa cell apoptosis, possibly via apoptotic signaling pathway involving CASP8 and CASP3 activation, and poly(ADP-ribose) polymerase (PARP) cleavage. Has no hyaluronidase activity in embryonic fibroblasts in vitro. Has no hyaluronidase activity in granulosa cells in vitro. In Sus scrofa (Pig), this protein is Hyaluronidase-3 (HYAL3).